The chain runs to 261 residues: Imidazole glycerol phosphate synthase subunit HisF (261 aa).

Active-site residues include D11 and D130.

Belongs to the HisA/HisF family. Heterodimer of HisH and HisF.

It is found in the cytoplasm. It carries out the reaction 5-[(5-phospho-1-deoxy-D-ribulos-1-ylimino)methylamino]-1-(5-phospho-beta-D-ribosyl)imidazole-4-carboxamide + L-glutamine = D-erythro-1-(imidazol-4-yl)glycerol 3-phosphate + 5-amino-1-(5-phospho-beta-D-ribosyl)imidazole-4-carboxamide + L-glutamate + H(+). The protein operates within amino-acid biosynthesis; L-histidine biosynthesis; L-histidine from 5-phospho-alpha-D-ribose 1-diphosphate: step 5/9. In terms of biological role, IGPS catalyzes the conversion of PRFAR and glutamine to IGP, AICAR and glutamate. The HisF subunit catalyzes the cyclization activity that produces IGP and AICAR from PRFAR using the ammonia provided by the HisH subunit. This is Imidazole glycerol phosphate synthase subunit HisF from Heliobacterium mobile (Heliobacillus mobilis).